Consider the following 152-residue polypeptide: Superoxide dismutase [Cu-Zn] (152 aa).

The Cu cation site is built by His45, His47, and His62. A disulfide bridge connects residues Cys56 and Cys145. Zn(2+) is bound by residues His62, His70, His79, and Asp82. His119 is a binding site for Cu cation.

It belongs to the Cu-Zn superoxide dismutase family. In terms of assembly, homodimer. The cofactor is Cu cation. Zn(2+) is required as a cofactor.

The protein localises to the cytoplasm. It carries out the reaction 2 superoxide + 2 H(+) = H2O2 + O2. In terms of biological role, destroys radicals which are normally produced within the cells and which are toxic to biological systems. This Paulownia kawakamii (Dragon tree) protein is Superoxide dismutase [Cu-Zn] (SODCC).